The primary structure comprises 72 residues: Large ribosomal subunit protein uL29 (72 aa).

It belongs to the universal ribosomal protein uL29 family.

The sequence is that of Large ribosomal subunit protein uL29 from Chlamydia felis (strain Fe/C-56) (Chlamydophila felis).